Reading from the N-terminus, the 647-residue chain is DNA topoisomerase 4 subunit B (647 aa).

ATP-binding positions include Y11, N51, D78, 118–124, and K344; that span reads GLHGVGS. The span at 391-401 shows a compositional bias: basic and acidic residues; the sequence is AARKARDESRN. Residues 391-421 form a disordered region; that stretch reads AARKARDESRNGKKNKKDKGLLSGKLTPAQS. The Toprim domain occupies 427–541; that stretch reads NELYLVEGDS…AGHVYIALPP (115 aa). Mg(2+) contacts are provided by E433, D506, and D508.

The protein belongs to the type II topoisomerase family. ParE type 2 subfamily. In terms of assembly, heterotetramer composed of ParC and ParE. Requires Mg(2+) as cofactor. Mn(2+) is required as a cofactor. Ca(2+) serves as cofactor.

The enzyme catalyses ATP-dependent breakage, passage and rejoining of double-stranded DNA.. Its activity is regulated as follows. Inhibited by quinolones, such as levofloxacin. Topoisomerase IV is essential for chromosome segregation. It relaxes supercoiled DNA. Performs the decatenation events required during the replication of a circular DNA molecule. The chain is DNA topoisomerase 4 subunit B from Streptococcus pneumoniae serotype 4 (strain ATCC BAA-334 / TIGR4).